Here is a 396-residue protein sequence, read N- to C-terminus: Ornithine aminotransferase (396 aa).

N6-(pyridoxal phosphate)lysine is present on lysine 255.

This sequence belongs to the class-III pyridoxal-phosphate-dependent aminotransferase family. OAT subfamily. Pyridoxal 5'-phosphate serves as cofactor.

It localises to the cytoplasm. It catalyses the reaction a 2-oxocarboxylate + L-ornithine = L-glutamate 5-semialdehyde + an L-alpha-amino acid. Its pathway is amino-acid biosynthesis; L-proline biosynthesis; L-glutamate 5-semialdehyde from L-ornithine: step 1/1. Catalyzes the interconversion of ornithine to glutamate semialdehyde. This Bacillus cereus (strain 03BB102) protein is Ornithine aminotransferase.